The chain runs to 564 residues: Isocitrate dehydrogenase kinase/phosphatase (564 aa).

Residues 315–321 (APGVKGM) and K336 each bind ATP. The active site involves D371.

This sequence belongs to the AceK family.

The protein resides in the cytoplasm. It catalyses the reaction L-seryl-[isocitrate dehydrogenase] + ATP = O-phospho-L-seryl-[isocitrate dehydrogenase] + ADP + H(+). Bifunctional enzyme which can phosphorylate or dephosphorylate isocitrate dehydrogenase (IDH) on a specific serine residue. This is a regulatory mechanism which enables bacteria to bypass the Krebs cycle via the glyoxylate shunt in response to the source of carbon. When bacteria are grown on glucose, IDH is fully active and unphosphorylated, but when grown on acetate or ethanol, the activity of IDH declines drastically concomitant with its phosphorylation. The protein is Isocitrate dehydrogenase kinase/phosphatase of Idiomarina loihiensis (strain ATCC BAA-735 / DSM 15497 / L2-TR).